The primary structure comprises 103 residues: Pyrimidine/purine nucleoside phosphorylase (103 aa).

The protein belongs to the nucleoside phosphorylase PpnP family.

The enzyme catalyses a purine D-ribonucleoside + phosphate = a purine nucleobase + alpha-D-ribose 1-phosphate. The catalysed reaction is adenosine + phosphate = alpha-D-ribose 1-phosphate + adenine. It carries out the reaction cytidine + phosphate = cytosine + alpha-D-ribose 1-phosphate. It catalyses the reaction guanosine + phosphate = alpha-D-ribose 1-phosphate + guanine. The enzyme catalyses inosine + phosphate = alpha-D-ribose 1-phosphate + hypoxanthine. The catalysed reaction is thymidine + phosphate = 2-deoxy-alpha-D-ribose 1-phosphate + thymine. It carries out the reaction uridine + phosphate = alpha-D-ribose 1-phosphate + uracil. It catalyses the reaction xanthosine + phosphate = alpha-D-ribose 1-phosphate + xanthine. Catalyzes the phosphorolysis of diverse nucleosides, yielding D-ribose 1-phosphate and the respective free bases. Can use uridine, adenosine, guanosine, cytidine, thymidine, inosine and xanthosine as substrates. Also catalyzes the reverse reactions. The sequence is that of Pyrimidine/purine nucleoside phosphorylase from Shewanella baltica (strain OS223).